A 597-amino-acid polypeptide reads, in one-letter code: Nuclear receptor subfamily 4 group A member 1 (597 aa).

The segment at 1-22 is disordered; the sequence is MPCIQAQYGTPATSPGPRDHLT. Residues 170 to 465 are required for nuclear import; sequence RVWTEQLPKA…PGEGKLIFCS (296 aa). The nuclear receptor DNA-binding region spans 263-338; the sequence is EGRCAVCGDN…VGMVKEVVRT (76 aa). 2 consecutive NR C4-type zinc fingers follow at residues 266 to 286 and 302 to 326; these read CAVCGDNASCQHYGVRTCEGC and CLANKDCPVDKRRRNRCQFCRFQKC. A required for binding NBRE-containing DNA region spans residues 267–353; sequence AVCGDNASCQ…RRGRLPSKPK (87 aa). The interval 298-360 is required for the interaction with RXRA; the sequence is AKYICLANKD…KPKQPPDASP (63 aa). The residue at position 340 (S340) is a Phosphoserine; by PKA. The interval 341–360 is disordered; the sequence is LKGRRGRLPSKPKQPPDASP. S350 is subject to Phosphoserine; by PKA, RPS6KA1 and RPS6KA3. In terms of domain architecture, NR LBD spans 359–594; sequence SPTNLLTSLI…PIVDKIFMDT (236 aa). The segment at 520–543 is binds lipopolysaccharide; the sequence is PRRVEELQNRIASCLKEHMAAVAG. An AF-2 region spans residues 583 to 594; it reads PPPIVDKIFMDT.

The protein belongs to the nuclear hormone receptor family. NR4 subfamily. Binds the NGFI-B response element (NBRE) as a monomer. Binds the Nur response element (NurRE), consisting of two inverse NBRE-related octanucleotide repeats separated by 6 base-pairs, as a dimer. Interacts (via N-terminus) with NLRP3 (via LRR repeat domain); the interaction is direct, requires binding of NR4A1/Nur77 to NBRE-containing dsDNA and lipopolysaccharide, and leads to non-canonical NLRP3 inflammasome activation. Interacts with GADD45GIP1. Interacts with STK11. Interacts with IFI27. Heterodimer (via DNA-binding domain) with RXRA (via C-terminus); DNA-binding of the heterodimer is enhanced by 9-cis retinoic acid. Competes for the RXRA interaction with EP300 and thereby attenuates EP300 mediated acetylation of RXRA. Interacts with NCOA1. Interacts with NCOA2. Interacts with NCOA3. The cofactor is Zn(2+). Post-translationally, phosphorylated at Ser-350 by RPS6KA1 and RPS6KA3 in response to mitogenic or stress stimuli. Phosphorylation of Ser-350 results in decrease in NBRE binding while phosphorylation of Ser-340 has little effect on it. In terms of processing, acetylated by p300/CBP, acetylation increases stability. Deacetylated by HDAC1. In terms of tissue distribution, expressed in lung, brain and superior cervical ganglia. High levels are seen in the adrenal tissue.

The protein localises to the nucleus. It is found in the cytoplasm. It localises to the cytosol. Its subcellular location is the mitochondrion. Orphan nuclear receptor. Binds the NGFI-B response element (NBRE) 5'-AAAGGTCA-3'. Binds 9-cis-retinoic acid outside of its ligand-binding (NR LBD) domain. Participates in energy homeostasis by sequestrating the kinase STK11 in the nucleus, thereby attenuating cytoplasmic AMPK activation. Regulates the inflammatory response in macrophages by regulating metabolic adaptations during inflammation, including repressing the transcription of genes involved in the citric acid cycle (TCA). Inhibits NF-kappa-B signaling by binding to low-affinity NF-kappa-B binding sites, such as at the IL2 promoter. May act concomitantly with NR4A2 in regulating the expression of delayed-early genes during liver regeneration. Plays a role in the vascular response to injury. Its function is as follows. In the cytosol, upon its detection of both bacterial lipopolysaccharide (LPS) and NBRE-containing mitochondrial DNA released by GSDMD pores during pyroptosis, it promotes non-canonical NLRP3 inflammasome activation by stimulating association of NLRP3 and NEK7. This Rattus norvegicus (Rat) protein is Nuclear receptor subfamily 4 group A member 1 (Nr4a1).